A 204-amino-acid polypeptide reads, in one-letter code: Large ribosomal subunit protein uL4 (204 aa).

The tract at residues 48 to 75 is disordered; it reads HTKGRSDVSGGGKKPWRQKGRGGARAGS.

This sequence belongs to the universal ribosomal protein uL4 family. Part of the 50S ribosomal subunit.

Functionally, one of the primary rRNA binding proteins, this protein initially binds near the 5'-end of the 23S rRNA. It is important during the early stages of 50S assembly. It makes multiple contacts with different domains of the 23S rRNA in the assembled 50S subunit and ribosome. Forms part of the polypeptide exit tunnel. In Campylobacter fetus subsp. fetus (strain 82-40), this protein is Large ribosomal subunit protein uL4.